Consider the following 156-residue polypeptide: Endoribonuclease YbeY (156 aa).

Residues His122, His126, and His132 each contribute to the Zn(2+) site.

It belongs to the endoribonuclease YbeY family. It depends on Zn(2+) as a cofactor.

It is found in the cytoplasm. Its function is as follows. Single strand-specific metallo-endoribonuclease involved in late-stage 70S ribosome quality control and in maturation of the 3' terminus of the 16S rRNA. The protein is Endoribonuclease YbeY of Bacillus cereus (strain ZK / E33L).